The sequence spans 76 residues: Heat shock factor-binding protein 1 (76 aa).

This sequence belongs to the HSBP1 family. As to quaternary structure, homohexamer. Associates with heptad repeats of HSF1 trimers and probably also HSF1 monomers, and with HSP70. Association with HSF1 trimers and HSP70 coincides with attenuation of heat shock response and the conversion of HSF1 trimer to monomer.

It is found in the nucleus. Functionally, negative regulator of the heat shock response. Negatively affects HSF1 DNA-binding activity. May have a role in the suppression of the activation of the stress response during the aging process. This chain is Heat shock factor-binding protein 1 (HSBP1), found in Pongo abelii (Sumatran orangutan).